The following is a 611-amino-acid chain: POU domain, class 6, transcription factor 1 (611 aa).

A disordered region spans residues 62–93 (ASQAAGEAGPDNLGSSAEATVKSPPGIPPSPA). One can recognise a POU-specific domain in the interval 449-523 (EDGINLEEIR…VLEKWLNEAE (75 aa)). A DNA-binding region (homeobox) is located at residues 544–603 (KRKRRTSFTPQAIEALNAYFEKNPLPTGQEITEIAKELNYDREVVRVWFCNRRQTLKNTS).

The protein belongs to the POU transcription factor family. Class-6 subfamily. In the embryo, expressed exclusively in the developing brain, whereas in the adult its expression is restricted to brain, heart, skeletal muscle and lung. In the brain, the highest expression levels are found in specific cell layers of the cortex, the olfactory bulb, the hippocampus and the cerebellum.

It is found in the nucleus. In terms of biological role, transcription factor that binds preferentially to a variant of the octamer motif (5'-ATGATAAT-3'). The sequence is that of POU domain, class 6, transcription factor 1 (POU6F1) from Homo sapiens (Human).